We begin with the raw amino-acid sequence, 282 residues long: Large ribosomal subunit protein uL2c (282 aa).

Residues 230–261 (SAQNAVDHPHGGGEGKAPIGRIPSTPWGKPAL) are disordered.

It belongs to the universal ribosomal protein uL2 family. Part of the 50S ribosomal subunit.

Its subcellular location is the plastid. This chain is Large ribosomal subunit protein uL2c (rpl2), found in Helicosporidium sp. subsp. Simulium jonesii (Green alga).